The primary structure comprises 408 residues: Probable cysteine desulfurase (408 aa).

Lysine 225 is subject to N6-(pyridoxal phosphate)lysine.

The protein belongs to the class-V pyridoxal-phosphate-dependent aminotransferase family. Csd subfamily. It depends on pyridoxal 5'-phosphate as a cofactor.

It catalyses the reaction (sulfur carrier)-H + L-cysteine = (sulfur carrier)-SH + L-alanine. Catalyzes the removal of elemental sulfur and selenium atoms from L-cysteine, L-cystine, L-selenocysteine, and L-selenocystine to produce L-alanine. The polypeptide is Probable cysteine desulfurase (csd) (Mycoplasma pneumoniae (strain ATCC 29342 / M129 / Subtype 1) (Mycoplasmoides pneumoniae)).